The following is a 194-amino-acid chain: dITP/XTP pyrophosphatase (194 aa).

Residue 7 to 12 (SGNVNK) coordinates substrate. Mg(2+) is bound by residues Glu-38 and Asp-67. The active-site Proton acceptor is the Asp-67. Substrate contacts are provided by residues Ser-68, 151–154 (FGYD), Lys-174, and 179–180 (HR).

This sequence belongs to the HAM1 NTPase family. Homodimer. Requires Mg(2+) as cofactor.

The catalysed reaction is XTP + H2O = XMP + diphosphate + H(+). It catalyses the reaction dITP + H2O = dIMP + diphosphate + H(+). It carries out the reaction ITP + H2O = IMP + diphosphate + H(+). Functionally, pyrophosphatase that catalyzes the hydrolysis of nucleoside triphosphates to their monophosphate derivatives, with a high preference for the non-canonical purine nucleotides XTP (xanthosine triphosphate), dITP (deoxyinosine triphosphate) and ITP. Seems to function as a house-cleaning enzyme that removes non-canonical purine nucleotides from the nucleotide pool, thus preventing their incorporation into DNA/RNA and avoiding chromosomal lesions. The protein is dITP/XTP pyrophosphatase of Treponema denticola (strain ATCC 35405 / DSM 14222 / CIP 103919 / JCM 8153 / KCTC 15104).